Consider the following 563-residue polypeptide: Arginine--tRNA ligase (563 aa).

Positions 120 to 130 match the 'HIGH' region motif; it reads PNIAKPFHIGH.

This sequence belongs to the class-I aminoacyl-tRNA synthetase family. As to quaternary structure, monomer.

The protein localises to the cytoplasm. The enzyme catalyses tRNA(Arg) + L-arginine + ATP = L-arginyl-tRNA(Arg) + AMP + diphosphate. In Clostridium botulinum (strain Langeland / NCTC 10281 / Type F), this protein is Arginine--tRNA ligase.